A 354-amino-acid polypeptide reads, in one-letter code: uncharacterized protein (354 aa).

Residues 96-130 are disordered; that stretch reads QVCPASAPNGKRAMKIPKVKEPRGENSSKKSSADQ. Residues 113-127 show a composition bias toward basic and acidic residues; the sequence is KVKEPRGENSSKKSS.

This is an uncharacterized protein from Caenorhabditis elegans.